A 207-amino-acid chain; its full sequence is Outer-membrane lipoprotein LolB (207 aa).

The N-terminal stretch at 1–26 is a signal peptide; the sequence is MSKLKIDTKRRFSLLIALVLIISLSS. A lipid anchor (N-palmitoyl cysteine) is attached at C27. A lipid anchor (S-diacylglycerol cysteine) is attached at C27.

The protein belongs to the LolB family. Monomer.

It is found in the cell outer membrane. In terms of biological role, plays a critical role in the incorporation of lipoproteins in the outer membrane after they are released by the LolA protein. The protein is Outer-membrane lipoprotein LolB of Francisella tularensis subsp. tularensis (strain WY96-3418).